The sequence spans 917 residues: Major intrinsically disordered Notch2-binding receptor 1 (917 aa).

Residues 1-892 (MEANQEASLF…AEFRRAKVCK (892 aa)) lie on the Cytoplasmic side of the membrane. 7 disordered regions span residues 337–367 (STYF…WPAK), 389–410 (SEEK…GPDR), 457–476 (DKSI…SVGT), 568–588 (ITNG…NVHH), 652–679 (SEAP…LENS), 706–727 (TRPS…IASI), and 746–783 (NEEE…LPKQ). The segment covering 460–476 (ISCTSGQHSSDTSSVGT) has biased composition (polar residues). A compositionally biased stretch (basic and acidic residues) spans 576-588 (KGDKCNRPENVHH). The residue at position 712 (Ser712) is a Phosphoserine. The helical transmembrane segment at 893 to 913 (IAALITAAACTVILVIVVPIC) threads the bilayer. At 914-917 (TMKS) the chain is on the extracellular side.

It belongs to the MINAR family. In terms of assembly, interacts with NOTCH2; this interaction increases MINAR1 stability. Interacts (via N-terminus) with DEPTOR (via PDZ domain); this interaction may stabilize DEPTOR protein by impairing its ubiquitination.

It is found in the cell membrane. Its function is as follows. Intrinsically disordered protein which may negatively regulate mTOR signaling pathway by stabilizing the mTOR complex component DEPTOR. Negatively regulates angiogenesis. Negatively regulates cell growth. Negatively regulates neurite outgrowth in hippocampal neurons. This is Major intrinsically disordered Notch2-binding receptor 1 (Minar1) from Rattus norvegicus (Rat).